The following is a 486-amino-acid chain: Membrane-bound lytic murein transglycosylase F (486 aa).

The first 21 residues, 1–21 (MTRIKLSYFTIGLVALLLALA), serve as a signal peptide directing secretion. The interval 22 to 268 (LWPNIPWRNG…RLEEKYLGHV (247 aa)) is non-LT domain. The interval 269 to 486 (GSFDYVDTKT…VVGPGWSIGD (218 aa)) is LT domain. The active site involves Glu313.

The protein in the N-terminal section; belongs to the bacterial solute-binding protein 3 family. In the C-terminal section; belongs to the transglycosylase Slt family.

Its subcellular location is the cell outer membrane. The catalysed reaction is Exolytic cleavage of the (1-&gt;4)-beta-glycosidic linkage between N-acetylmuramic acid (MurNAc) and N-acetylglucosamine (GlcNAc) residues in peptidoglycan, from either the reducing or the non-reducing ends of the peptidoglycan chains, with concomitant formation of a 1,6-anhydrobond in the MurNAc residue.. Functionally, murein-degrading enzyme that degrades murein glycan strands and insoluble, high-molecular weight murein sacculi, with the concomitant formation of a 1,6-anhydromuramoyl product. Lytic transglycosylases (LTs) play an integral role in the metabolism of the peptidoglycan (PG) sacculus. Their lytic action creates space within the PG sacculus to allow for its expansion as well as for the insertion of various structures such as secretion systems and flagella. The chain is Membrane-bound lytic murein transglycosylase F from Yersinia pestis bv. Antiqua (strain Antiqua).